The sequence spans 460 residues: MAFLTHLLVCVFGMGSWVAINGLWVELPLLVTELPEAWYLPSYLTVVIQLANIGPLLVTLMHRFRPGCLSEVPVIFLILCVGTAACILLAFLWNVTSWIQGGQHSVAFIVLTFFLALVDCTSSVTFLPFMSQLPTYYLTTFFIGEGLSGLLPALVALVQGSGITTCVNVTETPGTTLNTMETPITQGNLSPSLPSPSWHQESRYLAPRFSPLLFFLLLSFLTGCCLVAFFLLQRQPWGRQGSIEDLLHSQVTLHSIRPRDTEDTSSLGAPVSSPGKGSVEASVASLRPAQLAFIYSVVAFVNALTNGVLPSVQTYSCLPYGPVAYHLSATLSSVASPLACFLPIFLPNRSLLFLGVLTVLGTGFGAYNMAMAAMSPCPVLQGHWGGEVLIVLSWVLFAACLSYVKVMLGVILRDRSRSALLWCGAAVQLGSLIGALLMFPLVNVLKLFSSADYCSLDCSV.

Residues 1-6 (MAFLTH) lie on the Cytoplasmic side of the membrane. The chain crosses the membrane as a helical span at residues 7–27 (LLVCVFGMGSWVAINGLWVEL). Topologically, residues 28 to 37 (PLLVTELPEA) are extracellular. The helical transmembrane segment at 38-58 (WYLPSYLTVVIQLANIGPLLV) threads the bilayer. Residues 59–71 (TLMHRFRPGCLSE) lie on the Cytoplasmic side of the membrane. The helical transmembrane segment at 72–92 (VPVIFLILCVGTAACILLAFL) threads the bilayer. Residues 93–105 (WNVTSWIQGGQHS) lie on the Extracellular side of the membrane. Asn-94 carries an N-linked (GlcNAc...) asparagine glycan. Residues 106–126 (VAFIVLTFFLALVDCTSSVTF) traverse the membrane as a helical segment. At 127–137 (LPFMSQLPTYY) the chain is on the cytoplasmic side. Residues 138–158 (LTTFFIGEGLSGLLPALVALV) traverse the membrane as a helical segment. Residues 159-211 (QGSGITTCVNVTETPGTTLNTMETPITQGNLSPSLPSPSWHQESRYLAPRFSP) are Extracellular-facing. N-linked (GlcNAc...) asparagine glycosylation is present at Asn-168. A helical transmembrane segment spans residues 212-232 (LLFFLLLSFLTGCCLVAFFLL). Topologically, residues 233-291 (QRQPWGRQGSIEDLLHSQVTLHSIRPRDTEDTSSLGAPVSSPGKGSVEASVASLRPAQL) are cytoplasmic. Ser-242 and Ser-266 each carry phosphoserine. The helical transmembrane segment at 292 to 312 (AFIYSVVAFVNALTNGVLPSV) threads the bilayer. Residues 313-326 (QTYSCLPYGPVAYH) are Extracellular-facing. A helical transmembrane segment spans residues 327–347 (LSATLSSVASPLACFLPIFLP). The Cytoplasmic portion of the chain corresponds to 348-350 (NRS). A helical membrane pass occupies residues 351 to 371 (LLFLGVLTVLGTGFGAYNMAM). The Extracellular portion of the chain corresponds to 372-387 (AAMSPCPVLQGHWGGE). A disulfide bridge connects residues Cys-377 and Cys-454. Residues 388–408 (VLIVLSWVLFAACLSYVKVML) form a helical membrane-spanning segment. Residues 409–418 (GVILRDRSRS) are Cytoplasmic-facing. Residues 419–439 (ALLWCGAAVQLGSLIGALLMF) form a helical membrane-spanning segment. The Extracellular segment spans residues 440 to 460 (PLVNVLKLFSSADYCSLDCSV).

It belongs to the riboflavin transporter family. In terms of tissue distribution, within the small intestine, it is particularly expressed in the jujenum and the ileum. Almost negligible expression in the stomach, duodenum, and large intestine.

It localises to the cell membrane. It catalyses the reaction riboflavin(in) = riboflavin(out). In terms of biological role, plasma membrane transporter mediating the uptake by cells of the water soluble vitamin B2/riboflavin that plays a key role in biochemical oxidation-reduction reactions of the carbohydrate, lipid, and amino acid metabolism. The protein is Solute carrier family 52, riboflavin transporter, member 3 (Slc52a3) of Mus musculus (Mouse).